Here is a 415-residue protein sequence, read N- to C-terminus: Gamma-glutamyl phosphate reductase (415 aa).

Belongs to the gamma-glutamyl phosphate reductase family.

The protein localises to the cytoplasm. It catalyses the reaction L-glutamate 5-semialdehyde + phosphate + NADP(+) = L-glutamyl 5-phosphate + NADPH + H(+). Its pathway is amino-acid biosynthesis; L-proline biosynthesis; L-glutamate 5-semialdehyde from L-glutamate: step 2/2. Its function is as follows. Catalyzes the NADPH-dependent reduction of L-glutamate 5-phosphate into L-glutamate 5-semialdehyde and phosphate. The product spontaneously undergoes cyclization to form 1-pyrroline-5-carboxylate. This Mycobacterium sp. (strain JLS) protein is Gamma-glutamyl phosphate reductase.